The primary structure comprises 25 residues: Caerin-1.2 (25 aa).

Leucine amide is present on Leu25.

As to expression, expressed by the skin parotoid and/or rostral glands.

It is found in the secreted. Functionally, antibacterial peptide, that adopts an alpha helical conformation which can disrupt bacterial membranes. Each caerin displays a different antimicrobial specificity. The polypeptide is Caerin-1.2 (Ranoidea caerulea (Green tree frog)).